The following is a 662-amino-acid chain: Interferon-induced GTP-binding protein Mx1 (662 aa).

An N-acetylmethionine; in Interferon-induced GTP-binding protein Mx1; alternate modification is found at M1. Positions D67–P340 constitute a Dynamin-type G domain. Residues G77 to S84 are G1 motif. G77–S84 serves as a coordination point for GTP. A G2 motif region spans residues V102–R104. The segment at D178–G181 is G3 motif. GTP-binding positions include D178 to I182 and T247 to D250. The G4 motif stretch occupies residues T247–D250. The interval K279–G282 is G5 motif. The segment at L341–E366 is bundle signaling element (BSE). The middle domain stretch occupies residues E366 to C533. Residues D367–E632 are stalk. Residues K554–K557 form a critical for lipid-binding region. Residues M574 to G662 form the GED domain.

This sequence belongs to the TRAFAC class dynamin-like GTPase superfamily. Dynamin/Fzo/YdjA family. As to quaternary structure, homotetramer. Oligomerizes into multimeric filamentous or ring-like structures by virtue of its stalk domain. Oligomerization is critical for GTPase activity, protein stability, and recognition of viral target structures. Interacts with TRPC1, TRPC3, TRPC4, TRPC5, TRPC6 and TRPC7. Interacts with HSPA5. Interacts with DDX39A and DDX39B. Interacts with TUBB/TUBB5. The GTP-bound form interacts (via C-terminus) with THOV P5 protein. The GTP-bound form interacts with LACV protein N. Interacts with CCHFV protein N. ISGylated.

It localises to the cytoplasm. The protein resides in the endoplasmic reticulum membrane. Its subcellular location is the perinuclear region. It is found in the nucleus. Functionally, interferon-induced dynamin-like GTPase with antiviral activity against a wide range of RNA viruses and some DNA viruses. Its target viruses include negative-stranded RNA viruses and HBV through binding and inactivation of their ribonucleocapsid. May also antagonize reoviridae and asfarviridae replication. Inhibits thogoto virus (THOV) replication by preventing the nuclear import of viral nucleocapsids. Inhibits La Crosse virus (LACV) replication by sequestering viral nucleoprotein in perinuclear complexes, preventing genome amplification, budding, and egress. Inhibits influenza A virus (IAV) replication by decreasing or delaying NP synthesis and by blocking endocytic traffic of incoming virus particles. Enhances ER stress-mediated cell death after influenza virus infection. May regulate the calcium channel activity of TRPCs. The sequence is that of Interferon-induced GTP-binding protein Mx1 (MX1) from Homo sapiens (Human).